The following is a 948-amino-acid chain: PHD finger protein 14 (948 aa).

The interval 22–302 is disordered; that stretch reads DYDSSDDSDF…LSQSKSNEDS (281 aa). Phosphoserine is present on residues Ser-26 and Ser-29. Positions 36-47 are enriched in low complexity; it reads ASDSEGSGNGSE. Over residues 60-71 the composition is skewed to acidic residues; sequence DSEENILEEELN. Positions 72–85 are enriched in basic and acidic residues; the sequence is EDIKVKEEQLKNSA. 2 positions are modified to phosphoserine: Ser-84 and Ser-91. 2 stretches are compositionally biased toward basic and acidic residues: residues 95 to 110 and 117 to 139; these read QLIK…NGER and KEKE…EKAT. Residues 140-174 are compositionally biased toward low complexity; that stretch reads VSENVAASAAATTPATSPPAVNTSPSVPTTTTATE. A Phosphoserine modification is found at Ser-196. Composition is skewed to acidic residues over residues 199–212 and 233–256; these read ELND…EDDN and DGDN…EGND. Tyr-206 is modified (phosphotyrosine). Residue Ser-208 is modified to Phosphoserine. At Thr-287 the chain carries Phosphothreonine. Over residues 288–297 the composition is skewed to polar residues; it reads NDSLTLSQSK. Phosphoserine occurs at positions 290, 294, 298, 302, and 308. Residues 319-380 form a PHD-type 1 zinc finger; that stretch reads ILICCVCLGD…PWFCDACKCG (62 aa). Zn(2+)-binding residues include Cys-322, Cys-325, Cys-339, Cys-342, His-347, and Cys-350. Ser-359 bears the Phosphoserine mark. The Zn(2+) site is built by Cys-374, Cys-377, Cys-385, Cys-388, His-405, Cys-408, Cys-441, Cys-444, Cys-458, Cys-463, His-468, Cys-471, Cys-495, and His-498. The C2HC pre-PHD-type zinc finger occupies 382–415; that stretch reads SPSCELCPNQDGIFKETDAGRWVHIVCALYVPGV. The segment at 439 to 499 adopts a PHD-type 2 zinc-finger fold; the sequence is KECSFCEDPR…PFFAYCKQHA (61 aa). Ser-530 bears the Phosphoserine mark. A coiled-coil region spans residues 630 to 678; it reads MIQIQENMAEQKNIKDKLENEQEKLHVEYNKLCESLEELQNLNGKLRSE. Glu-648 participates in a covalent cross-link: Glycyl lysine isopeptide (Lys-Gly) (interchain with G-Cter in SUMO2). Gln-651 carries the phosphoserine modification. The PHD-type 3 zinc-finger motif lies at 725-779; the sequence is LYSCGICKKNHDQHLLLLCDTCKLHYHLGCLDPPLTRMPRKTKNSYWQCSECDQA. Residues Cys-728, Cys-731, Cys-743, Cys-746, His-751, Cys-754, Cys-773, and Cys-776 each contribute to the Zn(2+) site. Phosphoserine is present on residues Ser-781, Ser-782, and Ser-835. A disordered region spans residues 811 to 862; the sequence is VPQDVPPEPKKIPIRNTRTRGRKRSFVPEEEKHEERVPRERRQRQSVLQKKP. Over residues 836-850 the composition is skewed to basic and acidic residues; it reads FVPEEEKHEERVPRE. The PHD-type 4 zinc finger occupies 868–921; the sequence is RTECATCKGTGDNENLVRCDECRLCYHFGCLDPPLKKSPKQTGYGWICQECDSS. Residues Cys-871, Cys-874, Cys-886, Cys-889, His-894, Cys-897, Cys-915, and Cys-918 each contribute to the Zn(2+) site. The interval 920-948 is disordered; sequence SSSSKEDENEAERKNISQELNMEQKNPKK. A compositionally biased stretch (basic and acidic residues) spans 922 to 935; that stretch reads SSKEDENEAERKNI. Polar residues predominate over residues 936-948; that stretch reads SQELNMEQKNPKK.

The protein resides in the nucleus. Its subcellular location is the chromosome. It is found in the cytoplasm. In terms of biological role, histone-binding protein. Binds preferentially to unmodified histone H3 but can also bind to a lesser extent to histone H3 trimethylated at 'Lys-9' (H3K9me3) as well as to histone H3 monomethylated at 'Lys-27' (H3K27ac) and trimethylated at 'Lys-27' (H3K27me3). Represses PDGFRA expression, thus playing a role in regulation of mesenchymal cell proliferation. Suppresses the expression of CDKN1A/p21 by reducing the level of trimethylation of histone H3 'Lys-4', leading to enhanced proliferation of germinal center B cells. This chain is PHD finger protein 14 (PHF14), found in Homo sapiens (Human).